A 266-amino-acid polypeptide reads, in one-letter code: tRNA pseudouridine synthase A (266 aa).

Aspartate 51 acts as the Nucleophile in catalysis. Position 106 (tyrosine 106) interacts with substrate.

This sequence belongs to the tRNA pseudouridine synthase TruA family.

The enzyme catalyses uridine(38/39/40) in tRNA = pseudouridine(38/39/40) in tRNA. Functionally, formation of pseudouridine at positions 38, 39 and 40 in the anticodon stem and loop of transfer RNAs. The sequence is that of tRNA pseudouridine synthase A from Pyrococcus furiosus (strain ATCC 43587 / DSM 3638 / JCM 8422 / Vc1).